Here is a 497-residue protein sequence, read N- to C-terminus: Putative zinc finger and SCAN domain-containing protein 5D (497 aa).

Positions 41–123 (KAGRRMFSCP…DLLRNNRRPK (83 aa)) constitute an SCAN box domain. The segment at 148 to 342 (PASVRDDPRG…GPAGAVSHPN (195 aa)) is disordered. Polar residues predominate over residues 158–167 (VSSQRASSVN). Basic and acidic residues-rich tracts occupy residues 216-229 (PTLE…REEN) and 249-259 (KEGKEPKKRAS). C2H2-type zinc fingers lie at residues 352–374 (FACG…MRSH), 380–402 (FQCN…QRIH), 408–430 (YTCD…KRSH), 436–458 (YKCK…KLIH), and 464–486 (YKCP…QKTH).

It is found in the nucleus. In Homo sapiens (Human), this protein is Putative zinc finger and SCAN domain-containing protein 5D.